We begin with the raw amino-acid sequence, 102 residues long: Large ribosomal subunit protein bL21 (102 aa).

This sequence belongs to the bacterial ribosomal protein bL21 family. As to quaternary structure, part of the 50S ribosomal subunit. Contacts protein L20.

In terms of biological role, this protein binds to 23S rRNA in the presence of protein L20. The chain is Large ribosomal subunit protein bL21 from Finegoldia magna (strain ATCC 29328 / DSM 20472 / WAL 2508) (Peptostreptococcus magnus).